The primary structure comprises 77 residues: MVVNAVVGADEASARLREYCSGLPDVEKKIAESTSPEGAKLVSDFGIGSVPMVVILDEDSSELFRTADIGELEKFFS.

This is an uncharacterized protein from Treponema pallidum (strain Nichols).